Here is a 309-residue protein sequence, read N- to C-terminus: Bifunctional methylenetetrahydrofolate dehydrogenase/cyclohydrolase, mitochondrial (309 aa).

It belongs to the tetrahydrofolate dehydrogenase/cyclohydrolase family. Homodimer. Requires Mg(2+) as cofactor.

Its subcellular location is the mitochondrion. It catalyses the reaction (6R)-5,10-methylene-5,6,7,8-tetrahydrofolate + NAD(+) = (6R)-5,10-methenyltetrahydrofolate + NADH. It carries out the reaction (6R)-5,10-methenyltetrahydrofolate + H2O = (6R)-10-formyltetrahydrofolate + H(+). Its function is as follows. May play a role in spermatogenesis. This is Bifunctional methylenetetrahydrofolate dehydrogenase/cyclohydrolase, mitochondrial (Nmdmc) from Drosophila melanogaster (Fruit fly).